Here is a 500-residue protein sequence, read N- to C-terminus: L-arabinose isomerase (500 aa).

Positions 306, 333, 349, and 448 each coordinate Mn(2+).

The protein belongs to the arabinose isomerase family. Requires Mn(2+) as cofactor.

It carries out the reaction beta-L-arabinopyranose = L-ribulose. It functions in the pathway carbohydrate degradation; L-arabinose degradation via L-ribulose; D-xylulose 5-phosphate from L-arabinose (bacterial route): step 1/3. Catalyzes the conversion of L-arabinose to L-ribulose. The chain is L-arabinose isomerase from Saccharophagus degradans (strain 2-40 / ATCC 43961 / DSM 17024).